Reading from the N-terminus, the 375-residue chain is Queuine tRNA-ribosyltransferase (375 aa).

The active-site Proton acceptor is Asp-89. Substrate contacts are provided by residues 89–93, Asp-143, Gln-185, and Gly-212; that span reads DSGGF. Positions 243-249 are RNA binding; the sequence is GVGKPED. The active-site Nucleophile is the Asp-262. Residues 267-271 are RNA binding; important for wobble base 34 recognition; sequence TRNAR. Zn(2+) is bound by residues Cys-300, Cys-302, Cys-305, and His-331.

This sequence belongs to the queuine tRNA-ribosyltransferase family. As to quaternary structure, homodimer. Within each dimer, one monomer is responsible for RNA recognition and catalysis, while the other monomer binds to the replacement base PreQ1. The cofactor is Zn(2+).

It catalyses the reaction 7-aminomethyl-7-carbaguanine + guanosine(34) in tRNA = 7-aminomethyl-7-carbaguanosine(34) in tRNA + guanine. The protein operates within tRNA modification; tRNA-queuosine biosynthesis. Catalyzes the base-exchange of a guanine (G) residue with the queuine precursor 7-aminomethyl-7-deazaguanine (PreQ1) at position 34 (anticodon wobble position) in tRNAs with GU(N) anticodons (tRNA-Asp, -Asn, -His and -Tyr). Catalysis occurs through a double-displacement mechanism. The nucleophile active site attacks the C1' of nucleotide 34 to detach the guanine base from the RNA, forming a covalent enzyme-RNA intermediate. The proton acceptor active site deprotonates the incoming PreQ1, allowing a nucleophilic attack on the C1' of the ribose to form the product. After dissociation, two additional enzymatic reactions on the tRNA convert PreQ1 to queuine (Q), resulting in the hypermodified nucleoside queuosine (7-(((4,5-cis-dihydroxy-2-cyclopenten-1-yl)amino)methyl)-7-deazaguanosine). This chain is Queuine tRNA-ribosyltransferase, found in Pseudoalteromonas translucida (strain TAC 125).